The sequence spans 480 residues: MDFNSLRKKIITKKASVKELVNDIFLKIDSDDPEINSYICTTKDNAIQQAENIDKLIQNEEILPPLAGMPIAIKDNICTKGVHTTCASKMLKGFIAPYESTASDKLWSSGGICLGKTNLDEFAMGSSTETSVFGVTSNPWDISRVPGGSSGGSAASVAAGLCSAAIGSDTGGSIRQPASFCGVVGLKPTYGRVSRWGLVAFASSLDQIGPITNTVSDAAEILYSISGKDPLDSTCLDQPVPNYLINLNKSIKDLKIGIIKECFEHPGLNTEVKDSVLCGVERFKNLGAEIIEVECPRFNDGIATYYVIAPSEASANLARYDGVKYGFRSEEGSNLIDMTSKSRAEGFGDEVQRRILIGTYALSAGYSDAYYKKAQKVRTLIRNDFDKAFKKVDILLTPTCPTTAFLKGDFSNDPLSMYLSDLLTVPANLAGLPAISIPCGFDTKGLPIGLQLIGNVLEEDKILNAAHIFEIDAQVIKNRL.

Residues Lys-74 and Ser-149 each act as charge relay system in the active site. The active-site Acyl-ester intermediate is the Ser-173.

The protein belongs to the amidase family. GatA subfamily. As to quaternary structure, heterotrimer of A, B and C subunits.

It catalyses the reaction L-glutamyl-tRNA(Gln) + L-glutamine + ATP + H2O = L-glutaminyl-tRNA(Gln) + L-glutamate + ADP + phosphate + H(+). Its function is as follows. Allows the formation of correctly charged Gln-tRNA(Gln) through the transamidation of misacylated Glu-tRNA(Gln) in organisms which lack glutaminyl-tRNA synthetase. The reaction takes place in the presence of glutamine and ATP through an activated gamma-phospho-Glu-tRNA(Gln). The polypeptide is Glutamyl-tRNA(Gln) amidotransferase subunit A (Prochlorococcus marinus (strain MIT 9312)).